Here is a 197-residue protein sequence, read N- to C-terminus: Dephospho-CoA kinase (197 aa).

In terms of domain architecture, DPCK spans 2–197 (IVGLTGGIAS…YQQILSLNAA (196 aa)). 10–15 (ASGKTL) provides a ligand contact to ATP.

Belongs to the CoaE family.

The protein localises to the cytoplasm. The enzyme catalyses 3'-dephospho-CoA + ATP = ADP + CoA + H(+). The protein operates within cofactor biosynthesis; coenzyme A biosynthesis; CoA from (R)-pantothenate: step 5/5. In terms of biological role, catalyzes the phosphorylation of the 3'-hydroxyl group of dephosphocoenzyme A to form coenzyme A. The protein is Dephospho-CoA kinase of Dichelobacter nodosus (Bacteroides nodosus).